An 829-amino-acid chain; its full sequence is Leucine--tRNA ligase (829 aa).

A 'HIGH' region motif is present at residues 40–50 (PYPSGNIHMGH). Positions 594–598 (KMSKS) match the 'KMSKS' region motif. ATP is bound at residue Lys597.

The protein belongs to the class-I aminoacyl-tRNA synthetase family.

Its subcellular location is the cytoplasm. The enzyme catalyses tRNA(Leu) + L-leucine + ATP = L-leucyl-tRNA(Leu) + AMP + diphosphate. The protein is Leucine--tRNA ligase of Anaplasma marginale (strain St. Maries).